The chain runs to 294 residues: Phosphatidylserine decarboxylase proenzyme (294 aa).

Catalysis depends on charge relay system; for autoendoproteolytic cleavage activity residues D100, H157, and S261. S261 functions as the Schiff-base intermediate with substrate; via pyruvic acid; for decarboxylase activity in the catalytic mechanism. S261 carries the pyruvic acid (Ser); by autocatalysis modification.

It belongs to the phosphatidylserine decarboxylase family. PSD-B subfamily. Prokaryotic type I sub-subfamily. In terms of assembly, heterodimer of a large membrane-associated beta subunit and a small pyruvoyl-containing alpha subunit. Pyruvate serves as cofactor. In terms of processing, is synthesized initially as an inactive proenzyme. Formation of the active enzyme involves a self-maturation process in which the active site pyruvoyl group is generated from an internal serine residue via an autocatalytic post-translational modification. Two non-identical subunits are generated from the proenzyme in this reaction, and the pyruvate is formed at the N-terminus of the alpha chain, which is derived from the carboxyl end of the proenzyme. The autoendoproteolytic cleavage occurs by a canonical serine protease mechanism, in which the side chain hydroxyl group of the serine supplies its oxygen atom to form the C-terminus of the beta chain, while the remainder of the serine residue undergoes an oxidative deamination to produce ammonia and the pyruvoyl prosthetic group on the alpha chain. During this reaction, the Ser that is part of the protease active site of the proenzyme becomes the pyruvoyl prosthetic group, which constitutes an essential element of the active site of the mature decarboxylase.

Its subcellular location is the cell membrane. It catalyses the reaction a 1,2-diacyl-sn-glycero-3-phospho-L-serine + H(+) = a 1,2-diacyl-sn-glycero-3-phosphoethanolamine + CO2. It functions in the pathway phospholipid metabolism; phosphatidylethanolamine biosynthesis; phosphatidylethanolamine from CDP-diacylglycerol: step 2/2. Functionally, catalyzes the formation of phosphatidylethanolamine (PtdEtn) from phosphatidylserine (PtdSer). The polypeptide is Phosphatidylserine decarboxylase proenzyme (Mannheimia succiniciproducens (strain KCTC 0769BP / MBEL55E)).